A 245-amino-acid polypeptide reads, in one-letter code: tRNA pseudouridine synthase A (245 aa).

Asp-52 (nucleophile) is an active-site residue. Tyr-111 contacts substrate.

It belongs to the tRNA pseudouridine synthase TruA family. In terms of assembly, homodimer.

It catalyses the reaction uridine(38/39/40) in tRNA = pseudouridine(38/39/40) in tRNA. Formation of pseudouridine at positions 38, 39 and 40 in the anticodon stem and loop of transfer RNAs. This chain is tRNA pseudouridine synthase A, found in Rickettsia peacockii (strain Rustic).